The sequence spans 145 residues: Large ribosomal subunit protein bL9 (145 aa).

The protein belongs to the bacterial ribosomal protein bL9 family.

Its function is as follows. Binds to the 23S rRNA. The sequence is that of Large ribosomal subunit protein bL9 from Ureaplasma urealyticum serovar 10 (strain ATCC 33699 / Western).